Reading from the N-terminus, the 635-residue chain is Threonine--tRNA ligase (635 aa).

The TGS domain maps to 1 to 61; the sequence is MINISFPDGS…DNDCRLRILT (61 aa). Residues 242 to 533 are catalytic; sequence DHRKLGKELD…LIEEYAGRFP (292 aa). Residues C333, H384, and H510 each coordinate Zn(2+).

This sequence belongs to the class-II aminoacyl-tRNA synthetase family. Homodimer. Zn(2+) serves as cofactor.

It localises to the cytoplasm. The catalysed reaction is tRNA(Thr) + L-threonine + ATP = L-threonyl-tRNA(Thr) + AMP + diphosphate + H(+). Its function is as follows. Catalyzes the attachment of threonine to tRNA(Thr) in a two-step reaction: L-threonine is first activated by ATP to form Thr-AMP and then transferred to the acceptor end of tRNA(Thr). Also edits incorrectly charged L-seryl-tRNA(Thr). This Rickettsia bellii (strain RML369-C) protein is Threonine--tRNA ligase.